The primary structure comprises 144 residues: Bacilliredoxin SSP1311 (144 aa).

Belongs to the bacilliredoxin family.

In Staphylococcus saprophyticus subsp. saprophyticus (strain ATCC 15305 / DSM 20229 / NCIMB 8711 / NCTC 7292 / S-41), this protein is Bacilliredoxin SSP1311.